Reading from the N-terminus, the 661-residue chain is Glycogen debranching enzyme (661 aa).

Asp338 functions as the Nucleophile in the catalytic mechanism. Glu373 serves as the catalytic Proton donor. The segment at 460–481 is disordered; sequence NQLNGEGNRDGSDRNFSNNHGV.

This sequence belongs to the glycosyl hydrolase 13 family.

The enzyme catalyses Hydrolysis of (1-&gt;6)-alpha-D-glucosidic linkages to branches with degrees of polymerization of three or four glucose residues in limit dextrin.. Its pathway is glycan degradation; glycogen degradation. Functionally, removes maltotriose and maltotetraose chains that are attached by 1,6-alpha-linkage to the limit dextrin main chain, generating a debranched limit dextrin. The polypeptide is Glycogen debranching enzyme (Serratia proteamaculans (strain 568)).